A 390-amino-acid chain; its full sequence is Phosphopentomutase (390 aa).

Asp-10, Asp-282, His-287, Asp-323, His-324, and His-335 together coordinate Mn(2+).

Belongs to the phosphopentomutase family. The cofactor is Mn(2+).

The protein resides in the cytoplasm. The enzyme catalyses 2-deoxy-alpha-D-ribose 1-phosphate = 2-deoxy-D-ribose 5-phosphate. It catalyses the reaction alpha-D-ribose 1-phosphate = D-ribose 5-phosphate. It participates in carbohydrate degradation; 2-deoxy-D-ribose 1-phosphate degradation; D-glyceraldehyde 3-phosphate and acetaldehyde from 2-deoxy-alpha-D-ribose 1-phosphate: step 1/2. In terms of biological role, isomerase that catalyzes the conversion of deoxy-ribose 1-phosphate (dRib-1-P) and ribose 1-phosphate (Rib-1-P) to deoxy-ribose 5-phosphate (dRib-5-P) and ribose 5-phosphate (Rib-5-P), respectively. This is Phosphopentomutase from Lachnoclostridium phytofermentans (strain ATCC 700394 / DSM 18823 / ISDg) (Clostridium phytofermentans).